The chain runs to 186 residues: Peptidyl-tRNA hydrolase (186 aa).

Tyr-16 provides a ligand contact to tRNA. His-21 functions as the Proton acceptor in the catalytic mechanism. TRNA is bound by residues Tyr-66, Asn-68, and Asn-114.

Belongs to the PTH family. Monomer.

It is found in the cytoplasm. It carries out the reaction an N-acyl-L-alpha-aminoacyl-tRNA + H2O = an N-acyl-L-amino acid + a tRNA + H(+). Hydrolyzes ribosome-free peptidyl-tRNAs (with 1 or more amino acids incorporated), which drop off the ribosome during protein synthesis, or as a result of ribosome stalling. Its function is as follows. Catalyzes the release of premature peptidyl moieties from peptidyl-tRNA molecules trapped in stalled 50S ribosomal subunits, and thus maintains levels of free tRNAs and 50S ribosomes. In Ureaplasma urealyticum serovar 10 (strain ATCC 33699 / Western), this protein is Peptidyl-tRNA hydrolase.